Here is a 460-residue protein sequence, read N- to C-terminus: Proline--tRNA ligase (460 aa).

The protein belongs to the class-II aminoacyl-tRNA synthetase family. ProS type 3 subfamily. Homodimer.

The protein localises to the cytoplasm. The catalysed reaction is tRNA(Pro) + L-proline + ATP = L-prolyl-tRNA(Pro) + AMP + diphosphate. Catalyzes the attachment of proline to tRNA(Pro) in a two-step reaction: proline is first activated by ATP to form Pro-AMP and then transferred to the acceptor end of tRNA(Pro). The polypeptide is Proline--tRNA ligase (Methanococcus maripaludis (strain C7 / ATCC BAA-1331)).